Consider the following 376-residue polypeptide: tRNA(Met) cytidine acetate ligase (376 aa).

Residues 7–20 (IAEYNPFHNGHYYQ), Gly102, Asn160, and Arg181 contribute to the ATP site.

It belongs to the TmcAL family.

Its subcellular location is the cytoplasm. It carries out the reaction cytidine(34) in elongator tRNA(Met) + acetate + ATP = N(4)-acetylcytidine(34) in elongator tRNA(Met) + AMP + diphosphate. Its function is as follows. Catalyzes the formation of N(4)-acetylcytidine (ac(4)C) at the wobble position of elongator tRNA(Met), using acetate and ATP as substrates. First activates an acetate ion to form acetyladenylate (Ac-AMP) and then transfers the acetyl group to tRNA to form ac(4)C34. This chain is tRNA(Met) cytidine acetate ligase, found in Exiguobacterium sp. (strain ATCC BAA-1283 / AT1b).